A 550-amino-acid chain; its full sequence is MASFKLATDLPEWKKLEETYKSVGEKFSVRDAFAKDPKRFEEFSWIYKNYDDSKILFDFSKNLVNKEILDQLVTLAKEAGVEKLRDAMFAGDHINTTEDRAVYHVALRNRALRKMPVDGKDTAQEVDDVLKHMKEFSDSIRDGSWTGYTGKSITDVVNIGIGGSDLGPVMVTEALKAYSKPGLNVHFISNIDGTHTAETLKNLNPETTLFLIASKTFTTAETITNATSAKNWFLATAKDSKHIAKHFAALSTNEKEVVAFGIDAKNMFGFESWVGGRYSVWSAIGLSVAIYIGFENFNDFLKGAEAMDQHFLTTPLENNIPVIGGLLSVWYNNFFGAQTHLVVPFDQYLHRFPAYLQQLSMESNGKSVTRANVFTNYQTGTILFGEPATNAQHSFFQLVHQGTKLIPADFILAAQSHNPIEKNLHQRMLASNFFAQSEALMVGKDEAKVKAEGATGGLVPHKEFSGNRPTTSILAQKITPATLGSLIAYYEHLTFTEGAIWNINSFDQWGVELGKVLAKVIGKELDDKKAVATHDASTNGLINQFKEWEE.

D-glucose 6-phosphate contacts are provided by residues 163-164, 214-219, glutamine 358, glutamate 362, histidine 393, and lysine 515; these read GS and SKTFTT. Glutamate 362 functions as the Proton donor in the catalytic mechanism. Catalysis depends on residues histidine 393 and lysine 515.

Belongs to the GPI family. Homodimer.

Its subcellular location is the cytoplasm. The enzyme catalyses alpha-D-glucose 6-phosphate = beta-D-fructose 6-phosphate. It participates in carbohydrate degradation; glycolysis; D-glyceraldehyde 3-phosphate and glycerone phosphate from D-glucose: step 2/4. In the cytoplasm, catalyzes the conversion of glucose-6-phosphate to fructose-6-phosphate, the second step in glycolysis, and the reverse reaction during gluconeogenesis. The protein is Glucose-6-phosphate isomerase (PGI1) of Candida albicans (strain SC5314 / ATCC MYA-2876) (Yeast).